The following is a 362-amino-acid chain: Adenosine deaminase (362 aa).

Histidine 19 and histidine 21 together coordinate Zn(2+). Residues histidine 21, aspartate 23, and glycine 181 each coordinate substrate. Histidine 208 is a Zn(2+) binding site. Glutamate 211 serves as the catalytic Proton donor. Zn(2+) is bound at residue aspartate 300.

It belongs to the metallo-dependent hydrolases superfamily. Adenosine and AMP deaminases family. Adenosine deaminase subfamily. It depends on Zn(2+) as a cofactor.

The catalysed reaction is adenosine + H2O + H(+) = inosine + NH4(+). It catalyses the reaction 2'-deoxyadenosine + H2O + H(+) = 2'-deoxyinosine + NH4(+). Catalyzes the hydrolytic deamination of adenosine and 2-deoxyadenosine. The polypeptide is Adenosine deaminase (Mycobacterium marinum (strain ATCC BAA-535 / M)).